A 380-amino-acid polypeptide reads, in one-letter code: Queuine tRNA-ribosyltransferase (380 aa).

Asp95 acts as the Proton acceptor in catalysis. Residues 95-99 (DSGGF), Asp149, Gln192, and Gly219 each bind substrate. Residues 250 to 256 (GVGSPDS) are RNA binding. Asp269 serves as the catalytic Nucleophile. An RNA binding; important for wobble base 34 recognition region spans residues 274 to 278 (TRIGR). Cys307, Cys309, Cys312, and His338 together coordinate Zn(2+).

This sequence belongs to the queuine tRNA-ribosyltransferase family. In terms of assembly, homodimer. Within each dimer, one monomer is responsible for RNA recognition and catalysis, while the other monomer binds to the replacement base PreQ1. Requires Zn(2+) as cofactor.

The catalysed reaction is 7-aminomethyl-7-carbaguanine + guanosine(34) in tRNA = 7-aminomethyl-7-carbaguanosine(34) in tRNA + guanine. The protein operates within tRNA modification; tRNA-queuosine biosynthesis. Catalyzes the base-exchange of a guanine (G) residue with the queuine precursor 7-aminomethyl-7-deazaguanine (PreQ1) at position 34 (anticodon wobble position) in tRNAs with GU(N) anticodons (tRNA-Asp, -Asn, -His and -Tyr). Catalysis occurs through a double-displacement mechanism. The nucleophile active site attacks the C1' of nucleotide 34 to detach the guanine base from the RNA, forming a covalent enzyme-RNA intermediate. The proton acceptor active site deprotonates the incoming PreQ1, allowing a nucleophilic attack on the C1' of the ribose to form the product. After dissociation, two additional enzymatic reactions on the tRNA convert PreQ1 to queuine (Q), resulting in the hypermodified nucleoside queuosine (7-(((4,5-cis-dihydroxy-2-cyclopenten-1-yl)amino)methyl)-7-deazaguanosine). The polypeptide is Queuine tRNA-ribosyltransferase (Geobacillus thermodenitrificans (strain NG80-2)).